Reading from the N-terminus, the 118-residue chain is RxLR effector protein PITG_19617 (118 aa).

The signal sequence occupies residues 1–21 (MRAVYILAMACAATLQASSSA). Positions 50–64 (RLLRVEDKEEETEEE) match the RxLR-dEER motif.

It belongs to the RxLR effector family.

It localises to the secreted. It is found in the host nucleus. Its subcellular location is the host cytoplasm. Effector that enhances P.infestans colonization of Nicotiana benthamiana leaves. This is RxLR effector protein PITG_19617 from Phytophthora infestans (strain T30-4) (Potato late blight agent).